The chain runs to 218 residues: Claudin-5 (218 aa).

Over 1-7 the chain is Cytoplasmic; that stretch reads MGSAALE. A helical transmembrane segment spans residues 8–28; it reads ILGLVLCLVGWGGLILACGLP. The Extracellular portion of the chain corresponds to 29-81; that stretch reads MWQVTAFLDHNIVTAQTTWKGLWMSCVVQSTGHMQCKVYDSVLALSTEVQAAR. A helical transmembrane segment spans residues 82–102; it reads ALTVSAVLLAFVALFVTLAGA. Residues 103–122 are Cytoplasmic-facing; the sequence is QCTTCVAPGPAKARVALTGG. A helical transmembrane segment spans residues 123–143; that stretch reads VLYLFCGLLALVPLCWFANIV. The Extracellular portion of the chain corresponds to 144 to 159; sequence VREFYDPSVPVSQKYE. A helical membrane pass occupies residues 160–180; sequence LGAALYIGWAATALLMVGGCL. The Cytoplasmic portion of the chain corresponds to 181–218; the sequence is LCCGAWVCTGRPDLSFPVKYSAPRRPTATGDYDKKNYV. An interactions with TJP1, TJP2 and TJP3 region spans residues 217–218; sequence YV.

Belongs to the claudin family. In terms of assembly, directly interacts with TJP1/ZO-1, TJP2/ZO-2 and TJP3/ZO-3. Interacts with MPDZ.

It is found in the cell junction. Its subcellular location is the tight junction. The protein resides in the cell membrane. Plays a major role in tight junction-specific obliteration of the intercellular space. This Homo sapiens (Human) protein is Claudin-5 (CLDN5).